Reading from the N-terminus, the 871-residue chain is Metabotropic glutamate receptor 6 (871 aa).

The signal sequence occupies residues 1-23 (MGRLRVLLLWLAWWLSQAGIAHG). Topologically, residues 24–579 (AGSVRLAGGL…VVRLTWSSPW (556 aa)) are extracellular. C51 and C93 are oxidised to a cystine. L-glutamate is bound by residues S148, 169-171 (AST), and Y219. 7 disulfide bridges follow: C238-C530, C361-C377, C417-C424, C512-C531, C516-C534, C537-C549, and C552-C565. N-linked (GlcNAc...) asparagine glycosylation is present at N290. An L-glutamate-binding site is contributed by D301. K394 is an L-glutamate binding site. N-linked (GlcNAc...) asparagine glycans are attached at residues N445 and N473. N561 carries an N-linked (GlcNAc...) asparagine glycan. Residues 580–602 (AALPLLLAVLGIMATTTIIATFM) traverse the membrane as a helical segment. Residues 603 to 616 (RHNDTPIVRASGRE) lie on the Cytoplasmic side of the membrane. A helical membrane pass occupies residues 617–637 (LSYVLLTGIFLIYAITFLMVA). The Extracellular segment spans residues 638-648 (EPCAAVCASRR). Residues 649-667 (LLLGLGTTLSYSALLTKTN) form a helical membrane-spanning segment. At 668 to 691 (RIYRIFEQGKRSVTPPPFISPTSQ) the chain is on the cytoplasmic side. Residues 692–712 (LVITFGLTSLQVVGVIAWLGA) traverse the membrane as a helical segment. At 713–742 (QPPHSVIDYEEQRTVDPEQARGVLKCDMSD) the chain is on the extracellular side. A helical membrane pass occupies residues 743-764 (LSLIGCLGYSLLLMVTCTVYAI). At 765 to 777 (KARGVPETFNEAK) the chain is on the cytoplasmic side. Residues 778–800 (PIGFTMYTTCIIWLAFVPIFFGT) traverse the membrane as a helical segment. Residues 801 to 813 (AQSAEKIYIQTTT) are Extracellular-facing. Residues 814–839 (LTVSLSLSASVSLGMLYVPKTYVILF) traverse the membrane as a helical segment. The Cytoplasmic portion of the chain corresponds to 840 to 871 (HPEQNVQKRKRSLKKTSTMAAPPKSENSEDAK). Residues 848-871 (RKRSLKKTSTMAAPPKSENSEDAK) are disordered.

It belongs to the G-protein coupled receptor 3 family. In terms of assembly, homodimer. Interacts with GPR179. Interacts with photoreceptor synaptic protein LRIT1 (via its N-terminal extracellular domain). Detected in the outer plexiform layer in retina (at protein level).

The protein localises to the cell membrane. It is found in the endoplasmic reticulum membrane. It localises to the golgi apparatus membrane. The protein resides in the cell projection. Its subcellular location is the dendrite. Its function is as follows. G-protein coupled receptor for glutamate. Ligand binding causes a conformation change that triggers signaling via guanine nucleotide-binding proteins (G proteins) and modulates the activity of down-stream effectors, such as adenylate cyclase. Signaling inhibits adenylate cyclase activity. Signaling stimulates TRPM1 channel activity and Ca(2+) uptake. Required for normal vision. The protein is Metabotropic glutamate receptor 6 (Grm6) of Mus musculus (Mouse).